Here is a 439-residue protein sequence, read N- to C-terminus: Proline--tRNA ligase (439 aa).

Belongs to the class-II aminoacyl-tRNA synthetase family. ProS type 2 subfamily. In terms of assembly, homodimer.

It localises to the cytoplasm. The catalysed reaction is tRNA(Pro) + L-proline + ATP = L-prolyl-tRNA(Pro) + AMP + diphosphate. Functionally, catalyzes the attachment of proline to tRNA(Pro) in a two-step reaction: proline is first activated by ATP to form Pro-AMP and then transferred to the acceptor end of tRNA(Pro). In Parvibaculum lavamentivorans (strain DS-1 / DSM 13023 / NCIMB 13966), this protein is Proline--tRNA ligase.